A 79-amino-acid chain; its full sequence is Translational regulator CsrA (79 aa).

This sequence belongs to the CsrA/RsmA family. As to quaternary structure, homodimer; the beta-strands of each monomer intercalate to form a hydrophobic core, while the alpha-helices form wings that extend away from the core.

The protein localises to the cytoplasm. Its function is as follows. A translational regulator that binds mRNA to regulate translation initiation and/or mRNA stability. Usually binds in the 5'-UTR at or near the Shine-Dalgarno sequence preventing ribosome-binding, thus repressing translation. Its main target seems to be the major flagellin gene, while its function is anatagonized by FliW. In Syntrophus aciditrophicus (strain SB), this protein is Translational regulator CsrA.